The primary structure comprises 369 residues: ATP-dependent 6-phosphofructokinase (369 aa).

ATP-binding positions include G15, 81–82 (KG), and 108–111 (GDGS). D109 is a binding site for Mg(2+). Residues 132–134 (TID), R169, 176–178 (MGR), E230, R266, and 272–275 (HIQR) contribute to the substrate site. D134 functions as the Proton acceptor in the catalytic mechanism.

This sequence belongs to the phosphofructokinase type A (PFKA) family. Mixed-substrate PFK group III subfamily. Homodimer or homotetramer. It depends on Mg(2+) as a cofactor.

The protein resides in the cytoplasm. The enzyme catalyses beta-D-fructose 6-phosphate + ATP = beta-D-fructose 1,6-bisphosphate + ADP + H(+). It functions in the pathway carbohydrate degradation; glycolysis; D-glyceraldehyde 3-phosphate and glycerone phosphate from D-glucose: step 3/4. Its function is as follows. Catalyzes the phosphorylation of D-fructose 6-phosphate to fructose 1,6-bisphosphate by ATP, the first committing step of glycolysis. This Thermosynechococcus vestitus (strain NIES-2133 / IAM M-273 / BP-1) protein is ATP-dependent 6-phosphofructokinase.